The following is a 146-amino-acid chain: 3-hydroxyacyl-[acyl-carrier-protein] dehydratase FabZ (146 aa).

Residue histidine 48 is part of the active site.

It belongs to the thioester dehydratase family. FabZ subfamily.

The protein localises to the cytoplasm. It carries out the reaction a (3R)-hydroxyacyl-[ACP] = a (2E)-enoyl-[ACP] + H2O. In terms of biological role, involved in unsaturated fatty acids biosynthesis. Catalyzes the dehydration of short chain beta-hydroxyacyl-ACPs and long chain saturated and unsaturated beta-hydroxyacyl-ACPs. In Campylobacter lari (strain RM2100 / D67 / ATCC BAA-1060), this protein is 3-hydroxyacyl-[acyl-carrier-protein] dehydratase FabZ.